The primary structure comprises 358 residues: Peptide chain release factor 1 (358 aa).

Gln-233 carries the post-translational modification N5-methylglutamine.

The protein belongs to the prokaryotic/mitochondrial release factor family. In terms of processing, methylated by PrmC. Methylation increases the termination efficiency of RF1.

The protein localises to the cytoplasm. Peptide chain release factor 1 directs the termination of translation in response to the peptide chain termination codons UAG and UAA. The polypeptide is Peptide chain release factor 1 (Staphylococcus carnosus (strain TM300)).